Here is a 500-residue protein sequence, read N- to C-terminus: Protein psiE (500 aa).

A signal peptide spans 1-18; it reads MKLISVLITFLLATVIYS. The N-linked (GlcNAc...) asparagine glycan is linked to Asn59. In terms of domain architecture, PA14 spans 114-256; the sequence is TYDTTRKIYV…KDYCGVCQGD (143 aa). 5 N-linked (GlcNAc...) asparagine glycosylation sites follow: Asn314, Asn341, Asn366, Asn420, and Asn469.

The protein belongs to the prespore-cell-inducing factor family.

The protein localises to the secreted. This is Protein psiE (psiE) from Dictyostelium discoideum (Social amoeba).